The chain runs to 341 residues: MAKSHTLNPEEEFEEESGLRPSLLSEFIGQKEVLNNLTVYVQAAKNRKRALDHVLISGPPGLGKTTLAGIVSNELGTRLTITSAPVITKGADLARLLTSMGENEILFIDEIHTLHKKLEEILYPAMENYMIDLVIGEGVTAQMVQIPLKPFTLVGATTRSGLISEPLKSRFGIQLRLDYYNDEEMKEIVLRSSRILGVKIEDDAALEIGKRSRKTPRIANHLLKRIRDFSEVEGNLSVKKGLCLKAFEKMGIDDLGLDGMDRQILGCMIDRYKGGPVGLKAIAVVVGEEEKTIEDTYESFMVRIGLINRTPAGRVATEKAYRQLKRMQDFSENHGQDPTLF.

Residues 1 to 180 (MAKSHTLNPE…FGIQLRLDYY (180 aa)) are large ATPase domain (RuvB-L). Positions 19, 20, 61, 64, 65, 66, 170, 180, and 217 each coordinate ATP. Thr65 contributes to the Mg(2+) binding site. The interval 181 to 251 (NDEEMKEIVL…LCLKAFEKMG (71 aa)) is small ATPAse domain (RuvB-S). The segment at 254–341 (DLGLDGMDRQ…ENHGQDPTLF (88 aa)) is head domain (RuvB-H). Positions 309 and 314 each coordinate DNA.

The protein belongs to the RuvB family. Homohexamer. Forms an RuvA(8)-RuvB(12)-Holliday junction (HJ) complex. HJ DNA is sandwiched between 2 RuvA tetramers; dsDNA enters through RuvA and exits via RuvB. An RuvB hexamer assembles on each DNA strand where it exits the tetramer. Each RuvB hexamer is contacted by two RuvA subunits (via domain III) on 2 adjacent RuvB subunits; this complex drives branch migration. In the full resolvosome a probable DNA-RuvA(4)-RuvB(12)-RuvC(2) complex forms which resolves the HJ.

The protein resides in the cytoplasm. The enzyme catalyses ATP + H2O = ADP + phosphate + H(+). In terms of biological role, the RuvA-RuvB-RuvC complex processes Holliday junction (HJ) DNA during genetic recombination and DNA repair, while the RuvA-RuvB complex plays an important role in the rescue of blocked DNA replication forks via replication fork reversal (RFR). RuvA specifically binds to HJ cruciform DNA, conferring on it an open structure. The RuvB hexamer acts as an ATP-dependent pump, pulling dsDNA into and through the RuvAB complex. RuvB forms 2 homohexamers on either side of HJ DNA bound by 1 or 2 RuvA tetramers; 4 subunits per hexamer contact DNA at a time. Coordinated motions by a converter formed by DNA-disengaged RuvB subunits stimulates ATP hydrolysis and nucleotide exchange. Immobilization of the converter enables RuvB to convert the ATP-contained energy into a lever motion, pulling 2 nucleotides of DNA out of the RuvA tetramer per ATP hydrolyzed, thus driving DNA branch migration. The RuvB motors rotate together with the DNA substrate, which together with the progressing nucleotide cycle form the mechanistic basis for DNA recombination by continuous HJ branch migration. Branch migration allows RuvC to scan DNA until it finds its consensus sequence, where it cleaves and resolves cruciform DNA. The polypeptide is Holliday junction branch migration complex subunit RuvB (Leptospira borgpetersenii serovar Hardjo-bovis (strain L550)).